Consider the following 748-residue polypeptide: tRNA endonuclease ANKZF1 (748 aa).

Residues 96–120 (LFCSACDQIFQNHQEQREHYKLDWH) form a C2H2-type zinc finger. The disordered stretch occupies residues 135–185 (SASDFEQQSSTGDLSSISGSDDTDSSSEEDLLPLDEGRAESEKPNRPPGFY). The segment covering 143–154 (SSTGDLSSISGS) has biased composition (low complexity). Over residues 155-167 (DDTDSSSEEDLLP) the composition is skewed to acidic residues. Over residues 169–179 (DEGRAESEKPN) the composition is skewed to basic and acidic residues. Positions 227–370 (GPRYYVVLMA…QRVLHKLTTL (144 aa)) constitute a VLRF1 domain. Residue glutamine 270 is part of the active site. 2 positions are modified to phosphoserine: serine 282 and serine 385. Positions 383–408 (FHSPETHWKPVREERKKDTEKEKTKV) are enriched in basic and acidic residues. 2 disordered regions span residues 383–438 (FHSP…SEVE) and 460–497 (RRRRRKKKERSQEQQCGAHGPLPQQPQDEPFSQPTQEV). Residues 429–438 (SQEEDGSEVE) show a composition bias toward acidic residues. Residues 484–497 (QPQDEPFSQPTQEV) are compositionally biased toward polar residues. The stretch at 515–545 (ELWDTLLAACRAGEVEVLKLQLATGLVDPGV) is one ANK 1 repeat. At serine 555 the chain carries Phosphoserine. One copy of the ANK 2 repeat lies at 556–585 (GGFTLLHAAAAAGRGLVVRLLLEAGADPTV). The interval 621-677 (KARVPGPLTQEMEARQATRKKEQKAARRQREQQQRKQREQEEQEQEEQRRFAALSDR) is disordered. Residues 628 to 681 (LTQEMEARQATRKKEQKAARRQREQQQRKQREQEEQEQEEQRRFAALSDREKRA) adopt a coiled-coil conformation. Phosphothreonine is present on threonine 629. Residues 632-677 (MEARQATRKKEQKAARRQREQQQRKQREQEEQEQEEQRRFAALSDR) are compositionally biased toward basic and acidic residues. A VCP/p97-interacting motif (VIM) region spans residues 654-666 (QRKQREQEEQEQE). Phosphoserine is present on serine 702.

It belongs to the ANKZF1/VMS1 family. As to quaternary structure, interacts (via VIM motif) with VCP.

Its subcellular location is the cytoplasm. Functionally, endonuclease that cleaves polypeptidyl-tRNAs downstream of the ribosome-associated quality control (RQC) pathway to release incompletely synthesized polypeptides for degradation. The RQC pathway disassembles aberrantly stalled translation complexes to recycle or degrade the constituent parts. ANKZF1 acts downstream disassembly of stalled ribosomes and specifically cleaves off the terminal 3'-CCA nucleotides universal to all tRNAs from polypeptidyl-tRNAs, releasing (1) ubiquitinated polypeptides from 60S ribosomal subunit for degradation and (2) cleaved tRNAs. ANKZF1-cleaved tRNAs are then repaired and recycled by ELAC1 and TRNT1. Also plays a role in the cellular response to hydrogen peroxide and in the maintenance of mitochondrial integrity under conditions of cellular stress. The sequence is that of tRNA endonuclease ANKZF1 from Mus musculus (Mouse).